Here is a 68-residue protein sequence, read N- to C-terminus: MKAGIHPDYNEVTVTCSCGNTFVTRSTLGKPALHVEVCASCHPFYTGKQKIVDTAGRVEKFRQRYGMK.

4 residues coordinate Zn(2+): Cys16, Cys18, Cys38, and Cys41.

The protein belongs to the bacterial ribosomal protein bL31 family. Type A subfamily. In terms of assembly, part of the 50S ribosomal subunit. The cofactor is Zn(2+).

Its function is as follows. Binds the 23S rRNA. The protein is Large ribosomal subunit protein bL31 of Thiobacillus denitrificans (strain ATCC 25259 / T1).